Consider the following 513-residue polypeptide: GTPase Obg (513 aa).

The region spanning 3–160 is the Obg domain; that stretch reads THFVDRVVVH…LDLHLEVKTL (158 aa). An OBG-type G domain is found at 161–337; sequence ADVALVGFPS…LSFAMAELVS (177 aa). GTP-binding positions include 167 to 174, 192 to 196, 213 to 216, 289 to 292, and 318 to 320; these read GFPSAGKS, FTTLV, DVPG, NKAD, and SAV. 2 residues coordinate Mg(2+): S174 and T194. One can recognise an OCT domain in the interval 355-444; that stretch reads PRAVDDQGFK…ANAVVFDWEP (90 aa). Residues 457–513 are disordered; that stretch reads GSDLRLEDHSRPTRDEKRLQERERRAAKVTARDELEAERRAGHWTAADEADEELSQR. Over residues 458–497 the composition is skewed to basic and acidic residues; it reads SDLRLEDHSRPTRDEKRLQERERRAAKVTARDELEAERRA. Positions 504 to 513 are enriched in acidic residues; that stretch reads DEADEELSQR.

The protein belongs to the TRAFAC class OBG-HflX-like GTPase superfamily. OBG GTPase family. Monomer. The cofactor is Mg(2+).

It localises to the cytoplasm. An essential GTPase which binds GTP, GDP and possibly (p)ppGpp with moderate affinity, with high nucleotide exchange rates and a fairly low GTP hydrolysis rate. Plays a role in control of the cell cycle, stress response, ribosome biogenesis and in those bacteria that undergo differentiation, in morphogenesis control. The polypeptide is GTPase Obg (Kineococcus radiotolerans (strain ATCC BAA-149 / DSM 14245 / SRS30216)).